An 828-amino-acid chain; its full sequence is Phenylalanine--tRNA ligase beta subunit (828 aa).

One can recognise a tRNA-binding domain in the interval 43–161 (LSKNTNLVVG…DQIALGSNAL (119 aa)). The tract at residues 203 to 230 (KKKEKKTINYKTKNSKDQTNRKTTPKLN) is disordered. One can recognise a B5 domain in the interval 436 to 519 (RTNPTISLDL…RFYGCHKLPP (84 aa)). D497, D503, and D507 together coordinate Mg(2+). The FDX-ACB domain occupies 736–828 (PKFPTVIRDL…LIKHFRIEIR (93 aa)).

Belongs to the phenylalanyl-tRNA synthetase beta subunit family. Type 1 subfamily. In terms of assembly, tetramer of two alpha and two beta subunits. Requires Mg(2+) as cofactor.

It is found in the cytoplasm. The catalysed reaction is tRNA(Phe) + L-phenylalanine + ATP = L-phenylalanyl-tRNA(Phe) + AMP + diphosphate + H(+). This is Phenylalanine--tRNA ligase beta subunit from Aster yellows witches'-broom phytoplasma (strain AYWB).